Consider the following 352-residue polypeptide: Photosystem II D2 protein (352 aa).

Residues 40–60 (CAYMALGGWLTGTTFVTSWYT) form a helical membrane-spanning segment. His117 serves as a coordination point for chlorophyll a. The helical transmembrane segment at 124-140 (GFMLRQFEIARLVGIRP) threads the bilayer. Pheophytin a contacts are provided by Gln129 and Asn142. The chain crosses the membrane as a helical span at residues 152-165 (VFVSVFLMYPLGQS). His197 lines the chlorophyll a pocket. The chain crosses the membrane as a helical span at residues 207–227 (GALLCAIHGATVENTLFEDGD). 2 residues coordinate a plastoquinone: His214 and Phe261. His214 lines the Fe cation pocket. His268 lines the Fe cation pocket. A helical membrane pass occupies residues 278-294 (GLWTSSIGIIGLALNLR).

The protein belongs to the reaction center PufL/M/PsbA/D family. In terms of assembly, PSII is composed of 1 copy each of membrane proteins PsbA, PsbB, PsbC, PsbD, PsbE, PsbF, PsbH, PsbI, PsbJ, PsbK, PsbL, PsbM, PsbT, PsbX, PsbY, PsbZ, Psb30/Ycf12, peripheral proteins PsbO, CyanoQ (PsbQ), PsbU, PsbV and a large number of cofactors. It forms dimeric complexes. It depends on The D1/D2 heterodimer binds P680, chlorophylls that are the primary electron donor of PSII, and subsequent electron acceptors. It shares a non-heme iron and each subunit binds pheophytin, quinone, additional chlorophylls, carotenoids and lipids. There is also a Cl(-1) ion associated with D1 and D2, which is required for oxygen evolution. The PSII complex binds additional chlorophylls, carotenoids and specific lipids. as a cofactor.

It is found in the cellular thylakoid membrane. The enzyme catalyses 2 a plastoquinone + 4 hnu + 2 H2O = 2 a plastoquinol + O2. In terms of biological role, photosystem II (PSII) is a light-driven water:plastoquinone oxidoreductase that uses light energy to abstract electrons from H(2)O, generating O(2) and a proton gradient subsequently used for ATP formation. It consists of a core antenna complex that captures photons, and an electron transfer chain that converts photonic excitation into a charge separation. The D1/D2 (PsbA/PsbD) reaction center heterodimer binds P680, the primary electron donor of PSII as well as several subsequent electron acceptors. D2 is needed for assembly of a stable PSII complex. The sequence is that of Photosystem II D2 protein from Synechococcus sp. (strain RCC307).